Here is a 198-residue protein sequence, read N- to C-terminus: Ras-related protein RabH (198 aa).

14 to 21 serves as a coordination point for GTP; sequence GDWNVGKS. The Effector region signature appears at 36–44; sequence TKLSMGEHF. GTP is bound by residues 62–66 and 120–123; these read DTSGM and SKFD. C195 carries the post-translational modification Cysteine methyl ester. C195 carries the S-geranylgeranyl cysteine lipid modification. A propeptide spans 196-198 (removed in mature form); that stretch reads SIN.

It belongs to the small GTPase superfamily. Rab family.

It localises to the cell membrane. The chain is Ras-related protein RabH (rabH) from Dictyostelium discoideum (Social amoeba).